The chain runs to 250 residues: DNA repair protein RecO (250 aa).

Belongs to the RecO family.

Involved in DNA repair and RecF pathway recombination. This Staphylococcus haemolyticus (strain JCSC1435) protein is DNA repair protein RecO.